The chain runs to 298 residues: Probable tRNA(His) guanylyltransferase (298 aa).

Mg(2+)-binding residues include Asp58, Gly59, and Asp105. Residues 58 to 63 and 104 to 105 each bind GTP; these read DGRNFH and SD.

It belongs to the tRNA(His) guanylyltransferase family. As to quaternary structure, homotetramer. Interacts with MFN1 and MFN2; functions as a guanyl-nucleotide exchange factor/GEF for MFN2 and also probably MFN1. The cofactor is Mg(2+).

It is found in the cytoplasm. The protein resides in the mitochondrion. It catalyses the reaction a 5'-end ribonucleotide-tRNA(His) + GTP + ATP + H2O = a 5'-end phospho-guanosine-ribonucleotide-tRNA(His) + AMP + 2 diphosphate + H(+). Adds a GMP to the 5'-end of tRNA(His) after transcription and RNase P cleavage. This step is essential for proper recognition of the tRNA and for the fidelity of protein synthesis. Also functions as a guanyl-nucleotide exchange factor/GEF for the MFN1 and MFN2 mitofusins thereby regulating mitochondrial fusion. By regulating both mitochondrial dynamics and bioenergetic function, it contributes to cell survival following oxidative stress. This Mus musculus (Mouse) protein is Probable tRNA(His) guanylyltransferase (Thg1l).